Reading from the N-terminus, the 171-residue chain is Nicotinamide-nucleotide adenylyltransferase (171 aa).

It belongs to the archaeal NMN adenylyltransferase family.

The protein resides in the cytoplasm. The enzyme catalyses beta-nicotinamide D-ribonucleotide + ATP + H(+) = diphosphate + NAD(+). It participates in cofactor biosynthesis; NAD(+) biosynthesis; NAD(+) from nicotinamide D-ribonucleotide: step 1/1. In Methanococcus maripaludis (strain C6 / ATCC BAA-1332), this protein is Nicotinamide-nucleotide adenylyltransferase.